Reading from the N-terminus, the 155-residue chain is MLKKKKTEVYALGEHISMSADKARRVIDQIRGRSYEETLMILELMPYRACYPILKLVYSAAANASYNMGSSEANLVISKAEVNGGTTVKKLKPRARGRSFPIKRSTCHITIVMKDISLNDEYVKMNSLKKTRWKKKSTAMTYHDMYNSGGLWDKK.

The protein belongs to the universal ribosomal protein uL22 family. Part of the 50S ribosomal subunit.

The protein resides in the plastid. Its subcellular location is the chloroplast. Its function is as follows. This protein binds specifically to 23S rRNA. Functionally, the globular domain of the protein is located near the polypeptide exit tunnel on the outside of the subunit, while an extended beta-hairpin is found that lines the wall of the exit tunnel in the center of the 70S ribosome. This Atropa belladonna (Belladonna) protein is Large ribosomal subunit protein uL22c (rpl22).